A 431-amino-acid polypeptide reads, in one-letter code: Probable prephenate dehydrogenase [NADP(+)] (431 aa).

5–34 provides a ligand contact to NADP(+); sequence FQVGIIGFGDMGRLYAEYISKAGWRVNVCD. The 281-residue stretch at 5–285 folds into the Prephenate/arogenate dehydrogenase domain; the sequence is FQVGIIGFGD…GENMDRNSSG (281 aa).

It belongs to the prephenate/arogenate dehydrogenase family.

It localises to the cytoplasm. The enzyme catalyses prephenate + NADP(+) = 3-(4-hydroxyphenyl)pyruvate + CO2 + NADPH. Its pathway is amino-acid biosynthesis; L-tyrosine biosynthesis; (4-hydroxyphenyl)pyruvate from prephenate (NADP(+) route): step 1/1. The protein is Probable prephenate dehydrogenase [NADP(+)] (tyr1) of Schizosaccharomyces pombe (strain 972 / ATCC 24843) (Fission yeast).